A 247-amino-acid chain; its full sequence is ATP synthase subunit a, chloroplastic (247 aa).

5 helical membrane passes run 38-58, 95-115, 134-154, 199-219, and 220-240; these read QVLI…VIAV, VPFI…GALL, INTT…AGLS, LVVV…VMFL, and GLFT…AYIG.

The protein belongs to the ATPase A chain family. F-type ATPases have 2 components, CF(1) - the catalytic core - and CF(0) - the membrane proton channel. CF(1) has five subunits: alpha(3), beta(3), gamma(1), delta(1), epsilon(1). CF(0) has four main subunits: a, b, b' and c.

It localises to the plastid. The protein localises to the chloroplast thylakoid membrane. In terms of biological role, key component of the proton channel; it plays a direct role in the translocation of protons across the membrane. The chain is ATP synthase subunit a, chloroplastic from Hordeum vulgare (Barley).